Here is a 614-residue protein sequence, read N- to C-terminus: Dihydroxy-acid dehydratase (614 aa).

Asp-81 is a Mg(2+) binding site. Cys-122 contributes to the [2Fe-2S] cluster binding site. Mg(2+) is bound by residues Asp-123 and Lys-124. Lys-124 bears the N6-carboxylysine mark. Position 196 (Cys-196) interacts with [2Fe-2S] cluster. Mg(2+) is bound at residue Glu-492. The active-site Proton acceptor is the Ser-518.

Belongs to the IlvD/Edd family. Homodimer. [2Fe-2S] cluster serves as cofactor. Requires Mg(2+) as cofactor.

It catalyses the reaction (2R)-2,3-dihydroxy-3-methylbutanoate = 3-methyl-2-oxobutanoate + H2O. The catalysed reaction is (2R,3R)-2,3-dihydroxy-3-methylpentanoate = (S)-3-methyl-2-oxopentanoate + H2O. It functions in the pathway amino-acid biosynthesis; L-isoleucine biosynthesis; L-isoleucine from 2-oxobutanoate: step 3/4. Its pathway is amino-acid biosynthesis; L-valine biosynthesis; L-valine from pyruvate: step 3/4. Functions in the biosynthesis of branched-chain amino acids. Catalyzes the dehydration of (2R,3R)-2,3-dihydroxy-3-methylpentanoate (2,3-dihydroxy-3-methylvalerate) into 2-oxo-3-methylpentanoate (2-oxo-3-methylvalerate) and of (2R)-2,3-dihydroxy-3-methylbutanoate (2,3-dihydroxyisovalerate) into 2-oxo-3-methylbutanoate (2-oxoisovalerate), the penultimate precursor to L-isoleucine and L-valine, respectively. This chain is Dihydroxy-acid dehydratase, found in Ruegeria sp. (strain TM1040) (Silicibacter sp.).